Here is a 621-residue protein sequence, read N- to C-terminus: MRGLIQTRLLETGTLRTALFLSCYGRVFSSVSDGKGKVSYRERLRSGIVDIKEDDAVDLFQEMTRSRPRPRLIDFSRLFSVVARTKQYDLVLDLCKQMELKGIAHNLYTLSIMINCCCRCRKLSLAFSAMGKIIKLGYEPDTVTFSTLINGLCLEGRVSEALELVDRMVEMGHKPTLITLNALVNGLCLNGKVSDAVLLIDRMVETGFQPNEVTYGPVLKVMCKSGQTALAMELLRKMEERKIKLDAVKYSIIIDGLCKDGSLDNAFNLFNEMEIKGFKADIIIYTTLIRGFCYAGRWDDGAKLLRDMIKRKITPDVVAFSALIDCFVKEGKLREAEELHKEMIQRGISPDTVTYTSLIDGFCKENQLDKANHMLDLMVSKGCGPNIRTFNILINGYCKANLIDDGLELFRKMSLRGVVADTVTYNTLIQGFCELGKLEVAKELFQEMVSRRVRPDIVSYKILLDGLCDNGEPEKALEIFEKIEKSKMELDIGIYNIIIHGMCNASKVDDAWDLFCSLPLKGVKPDVKTYNIMIGGLCKKGSLSEADLLFRKMEEDGHSPNGCTYNILIRAHLGEGDATKSAKLIEEIKRCGFSVDASTVKMVVDMLSDGRLKKSFLDMLS.

16 PPR repeats span residues 36–70 (GKVS…RPRP), 71–105 (RLID…GIAH), 106–140 (NLYT…GYEP), 141–175 (DTVT…GHKP), 176–210 (TLIT…GFQP), 211–245 (NEVT…KIKL), 246–280 (DAVK…GFKA), 281–315 (DIII…KITP), 316–350 (DVVA…GISP), 351–385 (DTVT…GCGP), 386–420 (NIRT…GVVA), 421–455 (DTVT…RVRP), 456–490 (DIVS…KMEL), 491–525 (DIGI…GVKP), 526–560 (DVKT…GHSP), and 561–595 (NGCT…GFSV).

The protein belongs to the PPR family. P subfamily.

The sequence is that of Pentatricopeptide repeat-containing protein At1g12620 from Arabidopsis thaliana (Mouse-ear cress).